A 113-amino-acid polypeptide reads, in one-letter code: UPF0342 protein SEQ_0993 (113 aa).

This sequence belongs to the UPF0342 family.

The polypeptide is UPF0342 protein SEQ_0993 (Streptococcus equi subsp. equi (strain 4047)).